An 822-amino-acid polypeptide reads, in one-letter code: Lysine-specific histone demethylase 2 (822 aa).

The span at 1–11 (MATPRGRTKKK) shows a compositional bias: basic residues. The interval 1-47 (MATPRGRTKKKASFDHSPDSLPLRSSGRQAKKKATETTDEDEDGGSE) is disordered. A phosphoserine mark is found at Ser13, Ser17, and Ser26. Residues Cys53, Cys58, Cys65, Cys73, His84, His90, Cys92, Cys95, Cys142, Cys147, Cys169, and Cys185 each coordinate Zn(2+). A CW-type zinc finger spans residues 133 to 193 (DQQLPYWVQC…HCSLPEDLRV (61 aa)). Phosphoserine is present on Ser247. The tract at residues 273–292 (YQPNECGKALCVRPDVMELD) is GLYR1-binding. Residues 275 to 373 (PNECGKALCV…TGVLSVGADQ (99 aa)) enclose the SWIRM domain. Residue 383–439 (KSVIIIGAGPAGLAAARQLHNFGIKVTVLEAKDRIGGRVWDDKSFKGVTVGRGAQIV) participates in FAD binding. 3 histone H3-binding regions span residues 438 to 467 (IVNGCINNPVALMCEQLGISMHKFGERCDL), 487 to 498 (FNALLDVVSEWR), and 538 to 572 (FHLSNLEYACGSNLHQVSARSWDHNEFFAQFAGDH). The segment at 564–566 (FFA) is GLYR1-binding. Residues Val598, Glu795, and 803 to 805 (QTV) each bind FAD. Positions 798-814 (NRHFPQTVTGAYLSGVR) are GLYR1-binding.

The protein belongs to the flavin monoamine oxidase family. As to quaternary structure, interacts with its cofactor GLYR1 at nucleosomes; this interaction stimulates H3K4me1 and H3K4me2 demethylation. In contrast to KDM1A, does not form a complex with RCOR1/CoREST. Possible accessory component of the polycomb repressive deubiquitinase (PR-DUB) complex, at least composed of BAP1, one of ASXL1, ASXL2 or (probably) ASXL3 and one of MBD5 or MBD6. The PR-DUB core associates with a number of accessory proteins, including FOXK1, FOXK2, KDM1B, HCFC1 and OGT; KDM1B specifically associates with ASXL2 PR-DUB complexes. Requires FAD as cofactor. It depends on Zn(2+) as a cofactor.

Its subcellular location is the nucleus. It localises to the chromosome. It carries out the reaction N(6),N(6)-dimethyl-L-lysyl(4)-[histone H3] + 2 A + 2 H2O = L-lysyl(4)-[histone H3] + 2 formaldehyde + 2 AH2. It catalyses the reaction N(6)-methyl-L-lysyl(4)-[histone H3] + A + H2O = L-lysyl(4)-[histone H3] + formaldehyde + AH2. With respect to regulation, histone H3K4me1 and H3K4me2 demethylase activity is inhibited by DNA, this inhibition is released in complex with GLYR1. Functionally, histone demethylase that demethylates 'Lys-4' of histone H3, a specific tag for epigenetic transcriptional activation, thereby acting as a corepressor. Required for de novo DNA methylation of a subset of imprinted genes during oogenesis. Acts by oxidizing the substrate by FAD to generate the corresponding imine that is subsequently hydrolyzed. Demethylates both mono- and di-methylated 'Lys-4' of histone H3. Has no effect on tri-methylated 'Lys-4', mono-, di- or tri-methylated 'Lys-9', mono-, di- or tri-methylated 'Lys-27', mono-, di- or tri-methylated 'Lys-36' of histone H3, or on mono-, di- or tri-methylated 'Lys-20' of histone H4. Alone, it is unable to demethylate H3K4me on nucleosomes and requires the presence of GLYR1 to achieve such activity, they form a multifunctional enzyme complex that modifies transcribed chromatin and facilitates Pol II transcription through nucleosomes. The sequence is that of Lysine-specific histone demethylase 2 from Homo sapiens (Human).